The following is a 40-amino-acid chain: Probable non-specific lipid-transfer protein (40 aa).

Belongs to the plant LTP family. In terms of processing, phosphorylated by Ca(2+)-dependent protein kinase.

In terms of biological role, plant non-specific lipid-transfer proteins transfer phospholipids as well as galactolipids across membranes. May play a role in wax or cutin deposition in the cell walls of expanding epidermal cells and certain secretory tissues. The chain is Probable non-specific lipid-transfer protein from Triticum aestivum (Wheat).